Here is a 320-residue protein sequence, read N- to C-terminus: Cytochrome f (320 aa).

Residues 1–32 form the signal peptide; the sequence is MKTKKSYDKVTRWVTPPILMLIIIHIITGACS. Residues Y36, C56, C59, and H60 each contribute to the heme site. The helical transmembrane segment at 286 to 306 threads the bilayer; sequence IQGLLGFLASVVLAQIFLVLK.

It belongs to the cytochrome f family. The 4 large subunits of the cytochrome b6-f complex are cytochrome b6, subunit IV (17 kDa polypeptide, petD), cytochrome f and the Rieske protein, while the 4 small subunits are PetG, PetL, PetM and PetN. The complex functions as a dimer. It depends on heme as a cofactor.

It localises to the plastid. The protein resides in the chloroplast thylakoid membrane. Its function is as follows. Component of the cytochrome b6-f complex, which mediates electron transfer between photosystem II (PSII) and photosystem I (PSI), cyclic electron flow around PSI, and state transitions. The sequence is that of Cytochrome f from Gnetum parvifolium (Small-leaved jointfir).